A 209-amino-acid polypeptide reads, in one-letter code: Thymidylate kinase (209 aa).

10–17 (GPEGAGKT) is an ATP binding site.

It belongs to the thymidylate kinase family.

It catalyses the reaction dTMP + ATP = dTDP + ADP. Phosphorylation of dTMP to form dTDP in both de novo and salvage pathways of dTTP synthesis. This Anoxybacillus flavithermus (strain DSM 21510 / WK1) protein is Thymidylate kinase.